The following is a 729-amino-acid chain: Monosaccharide-sensing protein 2 (729 aa).

6 helical membrane-spanning segments follow: residues 1-21, 47-67, 81-101, 104-124, 139-159, and 165-185; these read MSGA…QGWD, LIVA…GGVA, ILYF…VLLL, LLDG…ISET, FTGS…SLMP, and LMLG…VFFL. Positions 347 to 363 are enriched in acidic residues; sequence VGEGEDYPSDHGDDSED. Disordered regions lie at residues 347–367 and 423–442; these read VGEG…DLHS and ERED…RRGS. Residues 423-434 show a composition bias toward basic and acidic residues; that stretch reads EREDESGQKEEG. Phosphoserine occurs at positions 438 and 448. A run of 6 helical transmembrane segments spans residues 507-527, 553-573, 585-605, 610-630, 650-670, and 679-699; these read ALVV…NGVL, ASLL…AVAM, LLTT…SNLV, IVHA…FVMG, ICIA…TYSL, and LAGV…FVFI.

Belongs to the major facilitator superfamily. Sugar transporter (TC 2.A.1.1) family. Mostly expressed in roots and stems, and, to a lower extent, in juvenile and adult leaves, and in flower tissues.

The protein resides in the vacuole membrane. It carries out the reaction D-glucose(out) + H(+)(in) = D-glucose(in) + H(+)(out). It catalyses the reaction sucrose(out) + H(+)(in) = sucrose(in) + H(+)(out). Functionally, sugar proton-coupled antiporter which contributes to vacuolar sugar import (e.g. monosaccharides including glucose, sucrose and fructose), particularly during stress responses (e.g. in response to cold). This Arabidopsis thaliana (Mouse-ear cress) protein is Monosaccharide-sensing protein 2.